The primary structure comprises 455 residues: UDP-glycosyltransferase 87A2 (455 aa).

Residue methionine 1 is modified to N-acetylmethionine. UDP-alpha-D-glucose-binding positions include serine 278, 327-329, 344-352, and 366-369; these read CDQ, HCGFNSTLE, and FWDQ.

This sequence belongs to the UDP-glycosyltransferase family.

In Arabidopsis thaliana (Mouse-ear cress), this protein is UDP-glycosyltransferase 87A2 (UGT87A2).